A 238-amino-acid polypeptide reads, in one-letter code: Small ribosomal subunit protein uS2 (238 aa).

This sequence belongs to the universal ribosomal protein uS2 family.

The polypeptide is Small ribosomal subunit protein uS2 (Actinobacillus pleuropneumoniae serotype 5b (strain L20)).